The primary structure comprises 493 residues: Aerolysin (493 aa).

The N-terminal stretch at 1–23 is a signal peptide; the sequence is MQKIKLTGLSLIISGLLMAQAQA. Intrachain disulfides connect Cys-42–Cys-98 and Cys-182–Cys-187. The segment at 68-84 is interaction with host N-linked glycan; sequence WQISGLANGWVIMGPGY. The part of the transmembrane beta-barrel after proteolytic activation of the toxin and insertion into the host membrane stretch occupies residues 256–288; sequence YGLSEKVTTKNKFKWPLVGETELSIEIAANQSW. Residues 346-355 form an interaction with glycans from host GPI-anchor region; that stretch reads RWGGNAWYTH. Positions 446 to 493 are excised as a propeptide; sequence AADSKVRRARSVDGAGQGLRLEIPLDAQELSGLGFNNVSLSVTPAANQ.

This sequence belongs to the aerolysin family. As to quaternary structure, homodimer in solution; homoheptamer in the host membrane. After binding to GPI-anchored proteins in target membranes and proteolytic removal of the C-terminal propeptide, the protein assembles into a heptameric pre-pore complex. A further conformation change leads to insertion into the host membrane. Proteolytic cleavage and subsequent release of the propeptide trigger a major conformation change, leading to the formation of a heptameric pre-pore that then inserts into the host membrane.

It is found in the secreted. Its subcellular location is the host cell membrane. In terms of biological role, secreted, cytolytic toxin that forms pores in host membranes after proteolytic removal of a C-terminal propeptide, leading to destruction of the membrane permeability barrier and host cell death. The pores are formed by transmembrane beta-strands and are approximately 3 nm in diameter. This is Aerolysin (aerA) from Aeromonas hydrophila.